A 161-amino-acid polypeptide reads, in one-letter code: Alpha-crystallin A chain (161 aa).

The required for complex formation with BFSP1 and BFSP2 stretch occupies residues Ala-1–Glu-51. The residue at position 38 (Gln-38) is a Deamidated glutamine; partial. One can recognise a sHSP domain in the interval Leu-40 to Ser-150. N6-acetyllysine is present on Lys-87. His-88 lines the Zn(2+) pocket. Asn-89 bears the Deamidated asparagine; partial mark. Zn(2+) is bound by residues Glu-90 and His-95. Ser-110 is modified (phosphoserine). Residue Asn-111 is modified to Deamidated asparagine; partial. An intrachain disulfide couples Cys-119 to Cys-130. Residue Gln-135 is modified to Deamidated glutamine; partial. The segment at Ala-140–Ser-161 is disordered. A compositionally biased stretch (basic and acidic residues) spans Ser-141–Pro-155. His-142 lines the Zn(2+) pocket. A glycan (O-linked (GlcNAc) serine) is linked at Ser-150.

It belongs to the small heat shock protein (HSP20) family. Heteromer composed of three CRYAA and one CRYAB subunits. Inter-subunit bridging via zinc ions enhances stability, which is crucial as there is no protein turn over in the lens. Can also form homodimers and homotetramers (dimers of dimers) which serve as the building blocks of homooligomers. Within homooligomers, the zinc-binding motif is created from residues of 3 different molecules. His-88 and Glu-90 from one molecule are ligands of the zinc ion, and His-95 and His-142 residues from additional molecules complete the site with tetrahedral coordination geometry. Part of a complex required for lens intermediate filament formation composed of BFSP1, BFSP2 and CRYAA. Undergoes age-dependent proteolytical cleavage at the C-terminus.

The protein resides in the cytoplasm. It is found in the nucleus. Its function is as follows. Contributes to the transparency and refractive index of the lens. In its oxidized form (absence of intramolecular disulfide bond), acts as a chaperone, preventing aggregation of various proteins under a wide range of stress conditions. Required for the correct formation of lens intermediate filaments as part of a complex composed of BFSP1, BFSP2 and CRYAA. This Galegeeska rufescens (East African rufous sengi) protein is Alpha-crystallin A chain (CRYAA).